We begin with the raw amino-acid sequence, 228 residues long: Cytidylate kinase (228 aa).

An ATP-binding site is contributed by 11–19; that stretch reads GPAGTGKSS.

It belongs to the cytidylate kinase family. Type 1 subfamily.

The protein localises to the cytoplasm. It carries out the reaction CMP + ATP = CDP + ADP. The enzyme catalyses dCMP + ATP = dCDP + ADP. The protein is Cytidylate kinase of Mycolicibacterium paratuberculosis (strain ATCC BAA-968 / K-10) (Mycobacterium paratuberculosis).